Reading from the N-terminus, the 379-residue chain is Chaperone protein DnaJ (379 aa).

One can recognise a J domain in the interval 5–70 (DYYEVLGVAK…QKRAAYDQYG (66 aa)). The CR-type zinc-finger motif lies at 139–217 (GYDTQIRVPS…CHGAGKVKET (79 aa)). Zn(2+) contacts are provided by Cys152, Cys155, Cys169, Cys172, Cys191, Cys194, Cys205, and Cys208. CXXCXGXG motif repeat units lie at residues 152–159 (CEICHGSG), 169–176 (CPTCSGSG), 191–198 (CPKCHGTG), and 205–212 (CGHCHGAG).

It belongs to the DnaJ family. Homodimer. Requires Zn(2+) as cofactor.

It is found in the cytoplasm. In terms of biological role, participates actively in the response to hyperosmotic and heat shock by preventing the aggregation of stress-denatured proteins and by disaggregating proteins, also in an autonomous, DnaK-independent fashion. Unfolded proteins bind initially to DnaJ; upon interaction with the DnaJ-bound protein, DnaK hydrolyzes its bound ATP, resulting in the formation of a stable complex. GrpE releases ADP from DnaK; ATP binding to DnaK triggers the release of the substrate protein, thus completing the reaction cycle. Several rounds of ATP-dependent interactions between DnaJ, DnaK and GrpE are required for fully efficient folding. Also involved, together with DnaK and GrpE, in the DNA replication of plasmids through activation of initiation proteins. The protein is Chaperone protein DnaJ of Paraburkholderia phytofirmans (strain DSM 17436 / LMG 22146 / PsJN) (Burkholderia phytofirmans).